A 218-amino-acid chain; its full sequence is Guanylate kinase (218 aa).

One can recognise a Guanylate kinase-like domain in the interval 14 to 193 (GVMLVLSSPS…AFASVRAIVS (180 aa)). Residue 21-28 (SPSGAGKS) coordinates ATP.

Belongs to the guanylate kinase family.

It is found in the cytoplasm. It catalyses the reaction GMP + ATP = GDP + ADP. Its function is as follows. Essential for recycling GMP and indirectly, cGMP. This is Guanylate kinase from Chelativorans sp. (strain BNC1).